The chain runs to 2194 residues: Supervillin (2194 aa).

The tract at residues 1–174 (MKRKERIARR…SSYSRTELSG (174 aa)) is interaction with MYLK. Disordered stretches follow at residues 35–98 (LEED…TQSL), 118–335 (EKYG…QRRH), 388–414 (PESI…KVLE), 450–500 (EDRG…TERM), 513–563 (AVSQ…QTSK), 589–667 (RASR…KVDE), 685–719 (KSFD…QPVT), and 739–791 (HPVM…DSST). Residue S50 is modified to Phosphoserine. The span at 87 to 98 (PYSSGIMDTQSL) shows a compositional bias: polar residues. Composition is skewed to basic and acidic residues over residues 139-161 (SRKD…ESSR) and 181-192 (ESKDYGLHRSDG). S245 and S262 each carry phosphoserine. 2 stretches are compositionally biased toward basic and acidic residues: residues 283–294 (PKHEWFLQKDSE) and 308–319 (KVREKLVREESA). Polar residues predominate over residues 320 to 330 (RSSPELTSESL). Residues S321 and S322 each carry the phosphoserine modification. Polar residues predominate over residues 455-467 (GRSQEAPSGTEDL). The segment covering 540–551 (PPQLQALKAKAP) has biased composition (low complexity). Basic and acidic residues-rich tracts occupy residues 592-615 (RKPE…ERGS) and 626-635 (ENRKTSERFR). Phosphoserine is present on residues S652 and S686. Over residues 704–714 (QRLRRLQDRSH) the composition is skewed to basic and acidic residues. Phosphoserine is present on residues S747 and S781. Basic and acidic residues predominate over residues 770–782 (LARDQTNESKDSA). Phosphotyrosine is present on Y829. T831 bears the Phosphothreonine mark. S893, S899, S903, S947, S979, and S1031 each carry phosphoserine. Residues 1036–1077 (EFGEPTSEQTGAAAGKPAAPTATPVSWKPQDPSEQPQEKRYQ) are disordered. The segment covering 1045-1059 (TGAAAGKPAAPTATP) has biased composition (low complexity). Residues S1099 and S1205 each carry the phosphoserine modification. T1210 is modified (phosphothreonine). Phosphoserine occurs at positions 1214, 1302, and 1385. The interaction with NEB stretch occupies residues 1399–1667 (SNVSLRSVNL…KFLDWTELKR (269 aa)). 5 Gelsolin-like repeats span residues 1421–1520 (KKLM…LGGQ), 1540–1662 (IETN…FLDW), 1732–1842 (ISVD…FQGG), 1861–1962 (WRLY…LGRR), and 1995–2102 (ATEF…FPSW). Positions 2131 to 2194 (KLCKTIYPLA…VNLKKAKGLF (64 aa)) constitute an HP domain.

This sequence belongs to the villin/gelsolin family. In terms of assembly, associates with F-actin. Interacts with NEB. Interacts with MYH9. Interacts with MYLK. Interacts with TASOR. Interacts with TRIP6 and DYNLT1. Interacts with KIF14; at midbody during cytokinesis.

It is found in the cell membrane. The protein localises to the cytoplasm. It localises to the cytoskeleton. Its subcellular location is the cell projection. The protein resides in the invadopodium. It is found in the podosome. The protein localises to the midbody. It localises to the cleavage furrow. Its function is as follows. Forms a high-affinity link between the actin cytoskeleton and the membrane. Is among the first costameric proteins to assemble during myogenesis and it contributes to myogenic membrane structure and differentiation. Appears to be involved in myosin II assembly. May modulate myosin II regulation through MLCK during cell spreading, an initial step in cell migration. May play a role in invadopodial function. May be involved in modulation of focal adhesions. Supervillin-mediated down-regulation of focal adhesions involves binding to TRIP6. Plays a role in cytokinesis through KIF14 interaction. This Bos taurus (Bovine) protein is Supervillin.